Consider the following 112-residue polypeptide: Large ribosomal subunit protein uL22 (112 aa).

It belongs to the universal ribosomal protein uL22 family. Part of the 50S ribosomal subunit.

In terms of biological role, this protein binds specifically to 23S rRNA; its binding is stimulated by other ribosomal proteins, e.g. L4, L17, and L20. It is important during the early stages of 50S assembly. It makes multiple contacts with different domains of the 23S rRNA in the assembled 50S subunit and ribosome. The globular domain of the protein is located near the polypeptide exit tunnel on the outside of the subunit, while an extended beta-hairpin is found that lines the wall of the exit tunnel in the center of the 70S ribosome. This chain is Large ribosomal subunit protein uL22, found in Anaplasma marginale (strain Florida).